The chain runs to 180 residues: Centromere protein M (180 aa).

In terms of assembly, component of the CENPA-NAC complex, at least composed of CENPA, CENPC, CENPH, CENPM, CENPN, CENPT and CENPU. The CENPA-NAC complex interacts with the CENPA-CAD complex, composed of CENPI, CENPK, CENPL, CENPO, CENPP, CENPQ, CENPR and CENPS.

The protein localises to the nucleus. It is found in the cytoplasm. Its subcellular location is the chromosome. It localises to the centromere. The protein resides in the kinetochore. In terms of biological role, component of the CENPA-NAC (nucleosome-associated) complex, a complex that plays a central role in assembly of kinetochore proteins, mitotic progression and chromosome segregation. The CENPA-NAC complex recruits the CENPA-CAD (nucleosome distal) complex and may be involved in incorporation of newly synthesized CENPA into centromeres. The chain is Centromere protein M (CENPM) from Bos taurus (Bovine).